Here is an 848-residue protein sequence, read N- to C-terminus: Neprilysin-11 (848 aa).

Over 1–74 (MPFGNDPPDY…WWKSRTTMEK (74 aa)) the chain is Cytoplasmic. A helical; Signal-anchor for type II membrane protein membrane pass occupies residues 75-95 (LLLPVLLLFCLLTAVLLAVII). Residues 96–848 (NTDKRIEAMK…VNPDHKCIVW (753 aa)) are Extracellular-facing. Residues 108–161 (HATQTEHAGFGDPTENPTKTAEDPRVPPIVPEAPTSPEPEVTTSTEKPKEPEVC) are disordered. Residues 133 to 144 (VPPIVPEAPTSP) show a composition bias toward pro residues. One can recognise a Peptidase M13 domain in the interval 160 to 848 (VCSTPGCVRA…VNPDHKCIVW (689 aa)). Residues cysteine 161 and cysteine 166 are joined by a disulfide bond. N-linked (GlcNAc...) asparagine glycosylation is found at asparagine 178, asparagine 249, asparagine 284, asparagine 312, asparagine 337, asparagine 364, asparagine 398, and asparagine 438. 4 cysteine pairs are disulfide-bonded: cysteine 184–cysteine 833, cysteine 192–cysteine 793, cysteine 247–cysteine 509, and cysteine 719–cysteine 845. Residue histidine 682 coordinates Zn(2+). Glutamate 683 is a catalytic residue. Histidine 686 contacts Zn(2+). Asparagine 726 is a glycosylation site (N-linked (GlcNAc...) asparagine). Glutamate 744 is a Zn(2+) binding site. Catalysis depends on aspartate 748, which acts as the Proton donor.

This sequence belongs to the peptidase M13 family. The cofactor is Zn(2+).

It localises to the cell membrane. Functionally, probable cell surface protease. The polypeptide is Neprilysin-11 (nep-11) (Caenorhabditis elegans).